A 289-amino-acid polypeptide reads, in one-letter code: tRNA(Ile)-lysidine synthase (289 aa).

11–16 (SGGPDS) lines the ATP pocket.

The protein belongs to the tRNA(Ile)-lysidine synthase family.

Its subcellular location is the cytoplasm. The enzyme catalyses cytidine(34) in tRNA(Ile2) + L-lysine + ATP = lysidine(34) in tRNA(Ile2) + AMP + diphosphate + H(+). Its function is as follows. Ligates lysine onto the cytidine present at position 34 of the AUA codon-specific tRNA(Ile) that contains the anticodon CAU, in an ATP-dependent manner. Cytidine is converted to lysidine, thus changing the amino acid specificity of the tRNA from methionine to isoleucine. This Mycoplasma pneumoniae (strain ATCC 29342 / M129 / Subtype 1) (Mycoplasmoides pneumoniae) protein is tRNA(Ile)-lysidine synthase.